A 417-amino-acid polypeptide reads, in one-letter code: Carbon catabolite repressor protein 4 homolog 4 (417 aa).

F2 carries the post-translational modification N-acetylserine. A Mg(2+)-binding site is contributed by E143.

This sequence belongs to the CCR4/nocturin family. Component of the CCR4-NOT complex, at least composed of CRR4 and CAF1 proteins. Forms homooligomers. Mg(2+) serves as cofactor.

The protein resides in the nucleus. It is found in the cytoplasm. It carries out the reaction Exonucleolytic cleavage of poly(A) to 5'-AMP.. Acts as a catalytic component of the CCR4-NOT core complex, which in the nucleus seems to be a general transcription factor, and in the cytoplasm the major mRNA deadenylase involved in mRNA turnover. Transcriptional regulator of circadian rhythms with poly(A)-degrading activity that affects the expression and rhythmicity of the clock core oscillator genes TOC1 and CCA1. Deadenylation may be a mechanism involved in the regulation of the circadian clock. May play a negative role in response against oxidative stress. Possesses magnesium-dependent poly(A)-specific exoribonuclease activity in vitro and is almost inactive with poly(U), poly(C) and poly(G) as substrates. This chain is Carbon catabolite repressor protein 4 homolog 4, found in Arabidopsis thaliana (Mouse-ear cress).